The primary structure comprises 116 residues: Large ribosomal subunit protein bL17 (116 aa).

This sequence belongs to the bacterial ribosomal protein bL17 family. As to quaternary structure, part of the 50S ribosomal subunit. Contacts protein L32.

The sequence is that of Large ribosomal subunit protein bL17 from Synechococcus sp. (strain RCC307).